Reading from the N-terminus, the 182-residue chain is Ribosome-recycling factor (182 aa).

This sequence belongs to the RRF family.

The protein localises to the cytoplasm. Functionally, responsible for the release of ribosomes from messenger RNA at the termination of protein biosynthesis. May increase the efficiency of translation by recycling ribosomes from one round of translation to another. This Parasynechococcus marenigrum (strain WH8102) protein is Ribosome-recycling factor.